Reading from the N-terminus, the 673-residue chain is RAS guanyl-releasing protein 4 (673 aa).

Composition is skewed to basic residues over residues 1–10 (MNRKDIKRKS) and 20–32 (GRGR…RHKT). Disordered stretches follow at residues 1–34 (MNRK…KTCP) and 164–188 (LGDA…PGLG). The N-terminal Ras-GEF domain occupies 49 to 175 (GVLSESSCSE…DASSLLSPGG (127 aa)). A compositionally biased stretch (low complexity) spans 164–173 (LGDASSLLSP). One can recognise a Ras-GEF domain in the interval 201 to 432 (ETEELAQHLT…YELSYAREPR (232 aa)). The EF-hand domain occupies 466–501 (HVEQLVESVFKNYDPEGRGSISLEDFERLSGNFPFA). The Phorbol-ester/DAG-type zinc finger occupies 540-590 (LHAFQEVTFRKPTFCHSCSGFLWGVTKQGYRCRDCGLCCHRHCRDQVRVEC). The segment at 592-633 (KRPETKGDPGPPGAPVPATSLPPANCGSEESLSYTLSPDPES) is disordered.

The protein belongs to the RASGRP family. As to expression, expressed by mast cells and their progenitors (at protein level). Expressed by dendritic cells. Expressed in neutrophils.

It localises to the cytoplasm. The protein localises to the cell membrane. Functions as a cation- and diacylglycerol (DAG)-regulated nucleotide exchange factor activating Ras through the exchange of bound GDP for GTP. In neutrophils, participates in a phospholipase C-activating N-formyl peptide-activated GPCR (G protein-coupled receptor) signaling pathway by promoting Ras-mediated activation of PIK3CG/PI3Kgamma to promote neutrophil functional responses. In CD117(+) dendritic cells and mast cells, participates in an lipopolysaccharide (LPS)-activated signaling pathway that stimulates the production of interferon-gamma and other pro-inflammatory cytokines by natural killer (NK) cells. May function in mast cell differentiation. Does not appear to be required for the development of B-cells, DC-cells, T-cells, or NK-cells. Its function is as follows. Binds diacylglycerol (DAG). Functionally, unable to bind diacylglycerol (DAG). The protein is RAS guanyl-releasing protein 4 (Rasgrp4) of Mus musculus (Mouse).